The primary structure comprises 221 residues: Protein GrpE (221 aa).

The interval 1-43 (MFTNPFGRKKDMSDDQKKNNQPDTEADNAENIKFAADDTELRA) is disordered. Over residues 8–20 (RKKDMSDDQKKNN) the composition is skewed to basic and acidic residues.

The protein belongs to the GrpE family. Homodimer.

The protein localises to the cytoplasm. Its function is as follows. Participates actively in the response to hyperosmotic and heat shock by preventing the aggregation of stress-denatured proteins, in association with DnaK and GrpE. It is the nucleotide exchange factor for DnaK and may function as a thermosensor. Unfolded proteins bind initially to DnaJ; upon interaction with the DnaJ-bound protein, DnaK hydrolyzes its bound ATP, resulting in the formation of a stable complex. GrpE releases ADP from DnaK; ATP binding to DnaK triggers the release of the substrate protein, thus completing the reaction cycle. Several rounds of ATP-dependent interactions between DnaJ, DnaK and GrpE are required for fully efficient folding. The sequence is that of Protein GrpE from Deinococcus radiodurans (strain ATCC 13939 / DSM 20539 / JCM 16871 / CCUG 27074 / LMG 4051 / NBRC 15346 / NCIMB 9279 / VKM B-1422 / R1).